We begin with the raw amino-acid sequence, 483 residues long: Teichuronic acid biosynthesis protein TuaB (483 aa).

Transmembrane regions (helical) follow at residues 15–34 (TSIS…ALLG), 41–63 (EFGL…DMGF), 83–105 (WLNI…VIAG), 112–134 (LVFL…QYQY), 154–176 (VLSF…YVIS), 294–316 (LALV…ITAV), 321–343 (WLAA…LMNP), 356–378 (LAFY…AVQT), 382–404 (LTVA…WLLA), 411–433 (LSAY…IIAF), and 448–470 (MRLA…KAYP).

It belongs to the polysaccharide synthase family.

It localises to the cell membrane. The protein operates within cell wall biogenesis; teichuronic acid biosynthesis. Functionally, might be involved in the translocation of teichuronic acid repeating units from the inner to the outer surface of the membrane. This Bacillus subtilis (strain 168) protein is Teichuronic acid biosynthesis protein TuaB (tuaB).